The primary structure comprises 299 residues: MLESHLIIHFLLAVIQFLLGTFTNGIIVVVNGIDLIKHRKMAPLDLLLSCLAVSRIFLQLFIFYVNVIVIFFIEFIMCSENCAILLFINELELWLATWLGVFYCAKVASVPHPLFIWLKMKISKLVPWMILGSLLYVSMTCVFHSKYAGFMVPYFLRNFFSQNATIQKEDTPAIQIFSFVAEFLVPLLIFLVAVLLLIFSLGRHTRQMRNTVAGSRVPGRGAPISALLSILSFVILYFSHCMIKVFLSSLKFHVRSFILPFFILVIGIYPSGHSLILILGNXKLKQNAKKFLLHSKCCQ.

Residues 1–9 (MLESHLIIH) are Extracellular-facing. A helical transmembrane segment spans residues 10–30 (FLLAVIQFLLGTFTNGIIVVV). The Cytoplasmic segment spans residues 31 to 55 (NGIDLIKHRKMAPLDLLLSCLAVSR). The helical transmembrane segment at 56 to 76 (IFLQLFIFYVNVIVIFFIEFI) threads the bilayer. Residues 77–81 (MCSEN) lie on the Extracellular side of the membrane. Residues 82-102 (CAILLFINELELWLATWLGVF) form a helical membrane-spanning segment. Residues 103 to 124 (YCAKVASVPHPLFIWLKMKISK) lie on the Cytoplasmic side of the membrane. Residues 125-145 (LVPWMILGSLLYVSMTCVFHS) traverse the membrane as a helical segment. Residues 146–178 (KYAGFMVPYFLRNFFSQNATIQKEDTPAIQIFS) lie on the Extracellular side of the membrane. N-linked (GlcNAc...) asparagine glycosylation is present at asparagine 163. The chain crosses the membrane as a helical span at residues 179–199 (FVAEFLVPLLIFLVAVLLLIF). The Cytoplasmic segment spans residues 200–222 (SLGRHTRQMRNTVAGSRVPGRGA). A helical transmembrane segment spans residues 223-243 (PISALLSILSFVILYFSHCMI). Over 244 to 257 (KVFLSSLKFHVRSF) the chain is Extracellular. A helical transmembrane segment spans residues 258–278 (ILPFFILVIGIYPSGHSLILI). At 279–299 (LGNXKLKQNAKKFLLHSKCCQ) the chain is on the cytoplasmic side.

Belongs to the G-protein coupled receptor T2R family.

It localises to the membrane. Receptor that may play a role in the perception of bitterness and is gustducin-linked. May play a role in sensing the chemical composition of the gastrointestinal content. The activity of this receptor may stimulate alpha gustducin, mediate PLC-beta-2 activation and lead to the gating of TRPM5. The sequence is that of Taste receptor type 2 member 1 (TAS2R1) from Pongo pygmaeus (Bornean orangutan).